The sequence spans 150 residues: Large ribosomal subunit protein bL9 (150 aa).

It belongs to the bacterial ribosomal protein bL9 family.

In terms of biological role, binds to the 23S rRNA. In Lactococcus lactis subsp. cremoris (strain MG1363), this protein is Large ribosomal subunit protein bL9.